A 389-amino-acid chain; its full sequence is Protein DDI1 homolog 1 (389 aa).

The tract at residues 109 to 132 is disordered; the sequence is SSSSAQSAQRTRRVEQDDEGEKSM. Asp261 is an active-site residue.

The protein belongs to the DDI1 family. As to expression, expressed in most tissues.

It localises to the cytoplasm. The protein resides in the nucleus. Its function is as follows. Aspartic protease. Required for the cleavage and activation of transcription factors such as isoform a of the transcription factor skn-1, which in turn regulates the expression of proteasomal subunits such as rpt-3. Plays a key role in the degradation of the potassium channel slo-1, perhaps acting directly, in cleaving slo-1 upstream of the ER-associated degradation pathway (ERAD), and also indirectly, via activation of the transcription factor skn-1, which mediates proteasomal homeostasis. The chain is Protein DDI1 homolog 1 from Caenorhabditis elegans.